The sequence spans 101 residues: Translation initiation factor IF-1, chloroplastic (101 aa).

The segment covering 1 to 10 (MNQLKKSFSP) has biased composition (polar residues). Residues 1–35 (MNQLKKSFSPTEGKKDQNNLINDPQKNKQKKQKKL) form a disordered region. Residues 26–101 (KNKQKKQKKL…TKGRITYRHR (76 aa)) form the S1-like domain.

It belongs to the IF-1 family. As to quaternary structure, component of the 30S ribosomal translation pre-initiation complex which assembles on the 30S ribosome in the order IF-2 and IF-3, IF-1 and N-formylmethionyl-tRNA(fMet); mRNA recruitment can occur at any time during PIC assembly.

It is found in the plastid. The protein resides in the chloroplast. Functionally, one of the essential components for the initiation of protein synthesis. Stabilizes the binding of IF-2 and IF-3 on the 30S subunit to which N-formylmethionyl-tRNA(fMet) subsequently binds. Helps modulate mRNA selection, yielding the 30S pre-initiation complex (PIC). Upon addition of the 50S ribosomal subunit IF-1, IF-2 and IF-3 are released leaving the mature 70S translation initiation complex. The chain is Translation initiation factor IF-1, chloroplastic from Tetradesmus obliquus (Green alga).